A 156-amino-acid chain; its full sequence is Arginine repressor (156 aa).

It belongs to the ArgR family.

It is found in the cytoplasm. It functions in the pathway amino-acid biosynthesis; L-arginine biosynthesis [regulation]. Functionally, regulates arginine biosynthesis genes. The polypeptide is Arginine repressor (Escherichia coli O81 (strain ED1a)).